A 261-amino-acid polypeptide reads, in one-letter code: MAHQAHAYHMVDPSPWPITGATAALLVTSGLAAWFHFNSMILILMGLTLLLLTMYQWWRDIIRESTFQGHHTLPVQKSLRYGMILFITSEVFFFLGFFWAFYHSSLAPTPELGGLWPPTGITPLDPFEVPLLNTAVLLASGITVTWAHHSLMEGQRKEAIQSLFITVLLGLYFTALQATEYYESPFTIADGAYGSTFFVATGFHGLHVIIGSTFLIVCLVRQTQYHFTSNHHFGFEAAAWYWHFVDVVWLFLYVSIYWWGS.

The Mitochondrial matrix portion of the chain corresponds to 1-15; it reads MAHQAHAYHMVDPSP. Residues 16-34 form a helical membrane-spanning segment; that stretch reads WPITGATAALLVTSGLAAW. The Mitochondrial intermembrane portion of the chain corresponds to 35–40; sequence FHFNSM. The helical transmembrane segment at 41–66 threads the bilayer; it reads ILILMGLTLLLLTMYQWWRDIIREST. Topologically, residues 67–72 are mitochondrial matrix; the sequence is FQGHHT. The helical transmembrane segment at 73-105 threads the bilayer; that stretch reads LPVQKSLRYGMILFITSEVFFFLGFFWAFYHSS. The Mitochondrial intermembrane portion of the chain corresponds to 106–128; that stretch reads LAPTPELGGLWPPTGITPLDPFE. A helical transmembrane segment spans residues 129–152; it reads VPLLNTAVLLASGITVTWAHHSLM. At 153 to 155 the chain is on the mitochondrial matrix side; the sequence is EGQ. Residues 156–183 traverse the membrane as a helical segment; that stretch reads RKEAIQSLFITVLLGLYFTALQATEYYE. Residues 184 to 190 are Mitochondrial intermembrane-facing; that stretch reads SPFTIAD. Residues 191–223 form a helical membrane-spanning segment; sequence GAYGSTFFVATGFHGLHVIIGSTFLIVCLVRQT. At 224 to 232 the chain is on the mitochondrial matrix side; that stretch reads QYHFTSNHH. A helical transmembrane segment spans residues 233 to 256; it reads FGFEAAAWYWHFVDVVWLFLYVSI. Residues 257 to 261 lie on the Mitochondrial intermembrane side of the membrane; sequence YWWGS.

This sequence belongs to the cytochrome c oxidase subunit 3 family. Component of the cytochrome c oxidase (complex IV, CIV), a multisubunit enzyme composed of 14 subunits. The complex is composed of a catalytic core of 3 subunits MT-CO1, MT-CO2 and MT-CO3, encoded in the mitochondrial DNA, and 11 supernumerary subunits COX4I, COX5A, COX5B, COX6A, COX6B, COX6C, COX7A, COX7B, COX7C, COX8 and NDUFA4, which are encoded in the nuclear genome. The complex exists as a monomer or a dimer and forms supercomplexes (SCs) in the inner mitochondrial membrane with NADH-ubiquinone oxidoreductase (complex I, CI) and ubiquinol-cytochrome c oxidoreductase (cytochrome b-c1 complex, complex III, CIII), resulting in different assemblies (supercomplex SCI(1)III(2)IV(1) and megacomplex MCI(2)III(2)IV(2)).

It is found in the mitochondrion inner membrane. It carries out the reaction 4 Fe(II)-[cytochrome c] + O2 + 8 H(+)(in) = 4 Fe(III)-[cytochrome c] + 2 H2O + 4 H(+)(out). Functionally, component of the cytochrome c oxidase, the last enzyme in the mitochondrial electron transport chain which drives oxidative phosphorylation. The respiratory chain contains 3 multisubunit complexes succinate dehydrogenase (complex II, CII), ubiquinol-cytochrome c oxidoreductase (cytochrome b-c1 complex, complex III, CIII) and cytochrome c oxidase (complex IV, CIV), that cooperate to transfer electrons derived from NADH and succinate to molecular oxygen, creating an electrochemical gradient over the inner membrane that drives transmembrane transport and the ATP synthase. Cytochrome c oxidase is the component of the respiratory chain that catalyzes the reduction of oxygen to water. Electrons originating from reduced cytochrome c in the intermembrane space (IMS) are transferred via the dinuclear copper A center (CU(A)) of subunit 2 and heme A of subunit 1 to the active site in subunit 1, a binuclear center (BNC) formed by heme A3 and copper B (CU(B)). The BNC reduces molecular oxygen to 2 water molecules using 4 electrons from cytochrome c in the IMS and 4 protons from the mitochondrial matrix. This is Cytochrome c oxidase subunit 3 (MT-CO3) from Latimeria chalumnae (Coelacanth).